Consider the following 171-residue polypeptide: uncharacterized protein (171 aa).

The chain crosses the membrane as a helical span at residues 21–43 (GVAASLLILLAVYTIFQSTVVIA).

The protein resides in the membrane. This is an uncharacterized protein from Archaeoglobus fulgidus (strain ATCC 49558 / DSM 4304 / JCM 9628 / NBRC 100126 / VC-16).